Reading from the N-terminus, the 200-residue chain is Glycerol-3-phosphate acyltransferase (200 aa).

The next 6 helical transmembrane spans lie at 9 to 29 (IIIGAYLIGSIPFGFLLAYFW), 54 to 74 (VPGMIVLILDMIKGISAVLLA), 81 to 101 (DIAVLGVALAVMAGHSWPLWL), 112 to 132 (GAGAILALSPMPLLLAFLVWL), 140 to 160 (YVSLGSILGAVSLPIWMALLN), and 165 to 185 (YLIFSVLVASFAVWKHSSNIG).

It belongs to the PlsY family. As to quaternary structure, probably interacts with PlsX.

Its subcellular location is the cell membrane. The enzyme catalyses an acyl phosphate + sn-glycerol 3-phosphate = a 1-acyl-sn-glycero-3-phosphate + phosphate. The protein operates within lipid metabolism; phospholipid metabolism. Catalyzes the transfer of an acyl group from acyl-phosphate (acyl-PO(4)) to glycerol-3-phosphate (G3P) to form lysophosphatidic acid (LPA). This enzyme utilizes acyl-phosphate as fatty acyl donor, but not acyl-CoA or acyl-ACP. This is Glycerol-3-phosphate acyltransferase from Desulforamulus reducens (strain ATCC BAA-1160 / DSM 100696 / MI-1) (Desulfotomaculum reducens).